A 243-amino-acid polypeptide reads, in one-letter code: Trypsin (243 aa).

An N-terminal signal peptide occupies residues 1-15; that stretch reads MKFLLLCVLLGAAAA. The propeptide at 16-20 is activation peptide; the sequence is FDDDK. Residues 21–241 form the Peptidase S1 domain; it reads IIGGATCAKS…YNAWIQNTIA (221 aa). 6 disulfides stabilise this stretch: C27-C157, C45-C61, C129-C230, C136-C203, C168-C182, and C193-C217. H60 serves as the catalytic Charge relay system. Ca(2+) is bound by residues E72, N74, and E82. D104 acts as the Charge relay system in catalysis. S197 (charge relay system) is an active-site residue.

The protein belongs to the peptidase S1 family. The cofactor is Ca(2+).

It localises to the secreted. It is found in the extracellular space. The enzyme catalyses Preferential cleavage: Arg-|-Xaa, Lys-|-Xaa.. This chain is Trypsin, found in Xenopus laevis (African clawed frog).